The primary structure comprises 149 residues: Nucleoside diphosphate kinase 1 (149 aa).

6 residues coordinate ATP: lysine 10, phenylalanine 58, arginine 86, threonine 92, arginine 103, and asparagine 113. Histidine 116 serves as the catalytic Pros-phosphohistidine intermediate.

The protein belongs to the NDK family. It depends on Mg(2+) as a cofactor.

The enzyme catalyses a 2'-deoxyribonucleoside 5'-diphosphate + ATP = a 2'-deoxyribonucleoside 5'-triphosphate + ADP. It catalyses the reaction a ribonucleoside 5'-diphosphate + ATP = a ribonucleoside 5'-triphosphate + ADP. Functionally, major role in the synthesis of nucleoside triphosphates other than ATP. The ATP gamma phosphate is transferred to the NDP beta phosphate via a ping-pong mechanism, using a phosphorylated active-site intermediate. This NDK is microtubule-associated. This is Nucleoside diphosphate kinase 1 (NDPK1) from Pisum sativum (Garden pea).